The sequence spans 274 residues: Large ribosomal subunit protein uL2c (274 aa).

Disordered stretches follow at residues Met-1 to Val-22 and Pro-225 to Gly-254.

It belongs to the universal ribosomal protein uL2 family. In terms of assembly, part of the 50S ribosomal subunit.

The protein resides in the plastid. It localises to the chloroplast. The polypeptide is Large ribosomal subunit protein uL2c (rpl2) (Sinapis alba (White mustard)).